A 486-amino-acid polypeptide reads, in one-letter code: MDLLNSDIILINILKYYNLKKIIINRDNVININILKKLVNLEELHIIYYDNNILNNIPENIKSLYISNLNIINLNFITKLKNITYLDISYNKNSNISNIILPHSIEFLNCESCNINDYNFINNLVNLKKLIISKNKFGNFNNVFPISIVELNMESIQIKDYKFIEKLINLKKLDISFNVKKNNIHLIKFPKSITHLCDYQSYKENYNYLKNLSNIIEYEFDDTIDVKLSDIDISKYYNLQYLDIQNCEINTDILLCHTKLKKIKINFNNSKKNIIIDLPISLECLKISNNFNINNYYFLTQLIRLKKIKIVNSYINILNACKSIEIIKFISCKSTYNFNFNCLEKYKKLDTLSLGFNNIYNLNECILPISIRQIIINNVEIIKKSNFLNNLYNLEYFEINSIICNDIITINLSKIKIKHFKIIYCNDTLFNIMLPDTIEIIEYIHDKNINLDWKKYKNLKKIKTLNNMKDILYKIYKNTNVEIEII.

9 LRR repeats span residues 18–39 (NLKK…KKLV), 43–59 (ELHI…NIPE), 60–81 (NIKS…TKLK), 82–103 (NITY…ILPH), 104–125 (SIEF…NNLV), 126–147 (NLKK…FPIS), 148–168 (IVEL…EKLI), 169–190 (NLKK…IKFP), and 198–219 (DYQS…IEYE).

This is an uncharacterized protein from Amsacta moorei entomopoxvirus (AmEPV).